Consider the following 236-residue polypeptide: Purine nucleoside phosphorylase DeoD-type (236 aa).

H5 lines the a purine D-ribonucleoside pocket. Residues G21, R25, R44, and R88 to T91 each bind phosphate. Residues E180–E182 and S204–D205 each bind a purine D-ribonucleoside. D205 (proton donor) is an active-site residue.

The protein belongs to the PNP/UDP phosphorylase family. As to quaternary structure, homohexamer; trimer of homodimers.

The catalysed reaction is a purine D-ribonucleoside + phosphate = a purine nucleobase + alpha-D-ribose 1-phosphate. It carries out the reaction a purine 2'-deoxy-D-ribonucleoside + phosphate = a purine nucleobase + 2-deoxy-alpha-D-ribose 1-phosphate. In terms of biological role, catalyzes the reversible phosphorolytic breakdown of the N-glycosidic bond in the beta-(deoxy)ribonucleoside molecules, with the formation of the corresponding free purine bases and pentose-1-phosphate. The chain is Purine nucleoside phosphorylase DeoD-type from Shewanella frigidimarina (strain NCIMB 400).